Reading from the N-terminus, the 180-residue chain is MTRKSIAIDMDEVLADTLGEIIDAVNFRADLGIKMEALNGQKLKHVIPEHDGLITEVLREPGFFRHLKVMPYAQEVVKKLTEHYDVYIATAAMDVPTSFSDKYEWLLEFFPFLDPQHFVFCGRKNIVKADYLIDDNPRQLEIFTGTPIMFTAVHNINDDRFERVNSWKDVEQYFLDNIEK.

D9 functions as the Nucleophile in the catalytic mechanism. Mg(2+) contacts are provided by D9, D11, and D135. D11 acts as the Proton donor in catalysis.

This sequence belongs to the 5'(3')-deoxyribonucleotidase family. Mg(2+) serves as cofactor.

Its function is as follows. Dephosphorylates the 5' and 2'(3')-phosphates of deoxyribonucleotides. The chain is Putative 5'(3')-deoxyribonucleotidase from Staphylococcus aureus (strain MSSA476).